The sequence spans 853 residues: uncharacterized protein (853 aa).

Positions 1–11 are enriched in basic residues; sequence MAPRKKAVTKK. 3 disordered regions span residues 1–448, 485–621, and 635–658; these read MAPR…SNNV, IAPT…NYFN, and ENYK…NEDE. Positions 20 to 37 are enriched in acidic residues; that stretch reads IEEEIIEEPVDEIVESDG. Positions 42-55 are enriched in basic residues; the sequence is NKKKGKRKSSKKSK. Acidic residues predominate over residues 60 to 74; the sequence is ENVEEEEQDQEEEEE. Over residues 75-87 the composition is skewed to basic and acidic residues; it reads GNKKQKEENDADK. Residues 88–107 are compositionally biased toward basic residues; sequence KSRKHDEHRKKRDSKNRRSH. The span at 112-121 shows a compositional bias: acidic residues; the sequence is ENEEGEEDDE. The segment covering 124–139 has biased composition (basic residues); sequence RKKRRRRKHREKRKKN. Acidic residues-rich tracts occupy residues 143–166 and 179–197; these read EEEE…EEDV and DFDE…EEEQ. The segment covering 216–228 has biased composition (basic residues); that stretch reads DKSKKRKSKKKKR. 2 stretches are compositionally biased toward acidic residues: residues 232-260 and 268-286; these read DDDD…EDVN and KEEE…DEEK. 3 stretches are compositionally biased toward basic and acidic residues: residues 287 to 361, 370 to 400, and 411 to 425; these read QSEN…RDHY, SRDH…RDHY, and RSRD…DEKS. Low complexity-rich tracts occupy residues 426-447, 510-613, and 636-652; these read SSSN…SSNN, NNDN…SNSS, and NYKN…NNNK.

This is an uncharacterized protein from Dictyostelium discoideum (Social amoeba).